We begin with the raw amino-acid sequence, 893 residues long: Valine--tRNA ligase (893 aa).

A 'HIGH' region motif is present at residues 57–67 (PNVTGTLHMGH). The 'KMSKS' region signature appears at 545–549 (KMSKS). Lys548 lines the ATP pocket. Residues 821–855 (TSGSVDLEAERKRLEKDLAAAQKELATTEGKLGNE) are a coiled coil.

Belongs to the class-I aminoacyl-tRNA synthetase family. ValS type 1 subfamily. As to quaternary structure, monomer.

The protein localises to the cytoplasm. The catalysed reaction is tRNA(Val) + L-valine + ATP = L-valyl-tRNA(Val) + AMP + diphosphate. Catalyzes the attachment of valine to tRNA(Val). As ValRS can inadvertently accommodate and process structurally similar amino acids such as threonine, to avoid such errors, it has a 'posttransfer' editing activity that hydrolyzes mischarged Thr-tRNA(Val) in a tRNA-dependent manner. The polypeptide is Valine--tRNA ligase (Nocardia farcinica (strain IFM 10152)).